The chain runs to 76 residues: MVLEKIKTLMVNQLSLDSQSITLKTRFREDLGLDSLDALELMMELEKIFNVSISDTTLQNFKTVEDVVLYIEKNLA.

Positions 1 to 75 (MVLEKIKTLM…DVVLYIEKNL (75 aa)) constitute a Carrier domain. Serine 35 carries the post-translational modification O-(pantetheine 4'-phosphoryl)serine.

Belongs to the acyl carrier protein (ACP) family. In terms of processing, 4'-phosphopantetheine is transferred from CoA to a specific serine of apo-ACP by AcpS. This modification is essential for activity because fatty acids are bound in thioester linkage to the sulfhydryl of the prosthetic group.

The protein resides in the cytoplasm. It participates in lipid metabolism; fatty acid biosynthesis. Carrier of the growing fatty acid chain in fatty acid biosynthesis. This chain is Acyl carrier protein, found in Phytoplasma australiense.